The primary structure comprises 217 residues: Cytidylate kinase (217 aa).

Position 10 to 18 (10 to 18 (GPAGAGKST)) interacts with ATP.

Belongs to the cytidylate kinase family. Type 1 subfamily.

It localises to the cytoplasm. It catalyses the reaction CMP + ATP = CDP + ADP. The catalysed reaction is dCMP + ATP = dCDP + ADP. The sequence is that of Cytidylate kinase from Clostridium botulinum (strain Langeland / NCTC 10281 / Type F).